We begin with the raw amino-acid sequence, 20 residues long: 54 kDa cell wall protein (20 aa).

The segment at 1 to 20 (KVPVDDQFRRVNNGGATDTR) is disordered.

The protein resides in the secreted. It localises to the cell wall. The protein is 54 kDa cell wall protein of Arabidopsis thaliana (Mouse-ear cress).